We begin with the raw amino-acid sequence, 149 residues long: uncharacterized protein (149 aa).

This is an uncharacterized protein from Schizosaccharomyces pombe (strain 972 / ATCC 24843) (Fission yeast).